The chain runs to 253 residues: Small ribosomal subunit protein uS2 (253 aa).

At Ser2 the chain carries N-acetylserine. Residues 212–253 (QQAAEEAAAGEEDDEAKEEVAAEEQTEAADWAEGQSEEVASW) form a disordered region. Positions 219 to 238 (AAGEEDDEAKEEVAAEEQTE) are enriched in acidic residues.

Belongs to the universal ribosomal protein uS2 family. As to quaternary structure, component of the small ribosomal subunit. Mature ribosomes consist of a small (40S) and a large (60S) subunit. The 40S subunit contains about 33 different proteins and 1 molecule of RNA (18S). The 60S subunit contains about 49 different proteins and 3 molecules of RNA (25S, 5.8S and 5S). Interacts with RPS21.

Its subcellular location is the cytoplasm. In terms of biological role, required for the assembly and/or stability of the 40S ribosomal subunit. Required for the processing of the 20S rRNA-precursor to mature 18S rRNA in a late step of the maturation of 40S ribosomal subunits. The protein is Small ribosomal subunit protein uS2 of Eremothecium gossypii (strain ATCC 10895 / CBS 109.51 / FGSC 9923 / NRRL Y-1056) (Yeast).